Reading from the N-terminus, the 320-residue chain is Calnexin-independence factor 1 (320 aa).

A disordered region spans residues Ser16 to Glu36.

It is found in the nucleus. The protein resides in the nucleolus. Functionally, induces a stably inheritable state of calnexin independence called the Cin state when overexpressed. This Schizosaccharomyces pombe (strain 972 / ATCC 24843) (Fission yeast) protein is Calnexin-independence factor 1 (cif1).